A 376-amino-acid chain; its full sequence is MKHNIIELAQNLIRRPSVSPDDQGCQQMIAQRLEKLGFTIEWMPFNNTLNLWAKHGCGAPVIAFAGHTDVVPTGDKSQWVYPPFEAEIVDDMLYGRGAADMKGSLAAMVVAAEEYVKANPNHAGTIAFLITSDEEAAAKDGTVRVVETLMARGEKIDFCMVGEPSSSKTLGDIVKNGRRGSVTGNLYIEGVLGHVAYPHLAENPVHKALPFLQELTAYQWDNGNEFFPPTSLQIANIQAGTGSNNVIPGELYVQFNLRYCTEVTDEFIKNTVAEMLKKHGLAYRIEWNLSGKPFLTEPGKLVDAVVDSLESVAGVKPKLDTGGGTSDGRFIALMGAEVVELGPLNATIHKVDERVSVTDLVTLGAVYNQMLVNLLD.

H67 serves as a coordination point for Zn(2+). D69 is an active-site residue. Residue D100 participates in Zn(2+) binding. Catalysis depends on E134, which acts as the Proton acceptor. Zn(2+) contacts are provided by E135, E163, and H349.

Belongs to the peptidase M20A family. DapE subfamily. As to quaternary structure, homodimer. Zn(2+) serves as cofactor. It depends on Co(2+) as a cofactor.

The enzyme catalyses N-succinyl-(2S,6S)-2,6-diaminopimelate + H2O = (2S,6S)-2,6-diaminopimelate + succinate. It functions in the pathway amino-acid biosynthesis; L-lysine biosynthesis via DAP pathway; LL-2,6-diaminopimelate from (S)-tetrahydrodipicolinate (succinylase route): step 3/3. Its function is as follows. Catalyzes the hydrolysis of N-succinyl-L,L-diaminopimelic acid (SDAP), forming succinate and LL-2,6-diaminopimelate (DAP), an intermediate involved in the bacterial biosynthesis of lysine and meso-diaminopimelic acid, an essential component of bacterial cell walls. In Actinobacillus succinogenes (strain ATCC 55618 / DSM 22257 / CCUG 43843 / 130Z), this protein is Succinyl-diaminopimelate desuccinylase.